Reading from the N-terminus, the 348-residue chain is MSDDKSKALAAALAQIEKSFGKGAIMKMDGSQQEENLEVISTGSLGLDLALGVGGLPRGRIVEIFGPESSGKTTLCLEAVAQCQKNGGVCAFVDAEHAFDPVYARKLGVKVEELYLSQPDTGEQALEICDTLVRSGGIDMVVVDSVAALVPKAEIEGDMGDSHVGLQARLMSQALRKLTGHIKKTNTLVVFINQIRMKIGVMFGSPETTTGGNALKFYSSVRLDIRRTGSIKKGEEVLGNETRVKVIKNKVAPPFRQAEFDILYGEGISWEGELIDIGVKNDIINKSGAWYSYNGAKIGQGKDNVRVWLKENPEISDEIDAKIRALNGVEMHITEGTQDETDGERPEE.

66 to 73 (GPESSGKT) provides a ligand contact to ATP.

It belongs to the RecA family.

Its subcellular location is the cytoplasm. In terms of biological role, can catalyze the hydrolysis of ATP in the presence of single-stranded DNA, the ATP-dependent uptake of single-stranded DNA by duplex DNA, and the ATP-dependent hybridization of homologous single-stranded DNAs. It interacts with LexA causing its activation and leading to its autocatalytic cleavage. The sequence is that of Protein RecA from Neisseria gonorrhoeae (strain NCCP11945).